A 195-amino-acid chain; its full sequence is Ubiquitin-conjugating enzyme E2 T (195 aa).

Residues 2–152 (QRTSRLKREL…ARQWTEKHAR (151 aa)) form the UBC core domain. The Glycyl thioester intermediate role is filled by cysteine 86. Lysine 91 participates in a covalent cross-link: Glycyl lysine isopeptide (Lys-Gly) (interchain with G-Cter in ubiquitin). Residues 146-157 (WTEKHARQKTDE) are compositionally biased toward basic and acidic residues. A disordered region spans residues 146–195 (WTEKHARQKTDEEGMPGSLPEVGGSEGPSAAQKRKAGQLSSGGKRFCPDV). Lysine 180 participates in a covalent cross-link: Glycyl lysine isopeptide (Lys-Gly) (interchain with G-Cter in ubiquitin). A Glycyl lysine isopeptide (Lys-Gly) (interchain with G-Cter in SUMO2) cross-link involves residue lysine 189.

The protein belongs to the ubiquitin-conjugating enzyme family. As to quaternary structure, interacts with FANCL and BRCA1. Auto-ubiquitinated. Effects of auto-monoubiquitination at Lys-91 and Lys-180 are unclear.

The protein resides in the nucleus. It catalyses the reaction S-ubiquitinyl-[E1 ubiquitin-activating enzyme]-L-cysteine + [E2 ubiquitin-conjugating enzyme]-L-cysteine = [E1 ubiquitin-activating enzyme]-L-cysteine + S-ubiquitinyl-[E2 ubiquitin-conjugating enzyme]-L-cysteine.. Its pathway is protein modification; protein ubiquitination. Its function is as follows. Accepts ubiquitin from the E1 complex and catalyzes its covalent attachment to other proteins. Catalyzes monoubiquitination. Involved in mitomycin-C (MMC)-induced DNA repair: acts as a specific E2 ubiquitin-conjugating enzyme for the Fanconi anemia complex by associating with E3 ubiquitin-protein ligase FANCL and catalyzing monoubiquitination of FANCD2, a key step in the DNA damage pathway. Also mediates monoubiquitination of FANCL and FANCI. May contribute to ubiquitination and degradation of BRCA1. In vitro able to promote polyubiquitination using all 7 ubiquitin Lys residues, but may prefer 'Lys-11'-, 'Lys-27'-, 'Lys-48'- and 'Lys-63'-linked polyubiquitination. The protein is Ubiquitin-conjugating enzyme E2 T (UBE2T) of Bos taurus (Bovine).